Consider the following 617-residue polypeptide: MNKYPLLSLINSPDDLRLLSKDKLPQLCQELRSYLLESVSQSSGHLASGLGTVELTVALHYVFKTPFDQLLWDVGHQAYPHKILTGRRDKMSTIRQKGGLHPFPWREESEFDVLSVGHSSTSISAGLGIAIAAQKENLGRKTICVIGDGAITAGMAFEALNHAGSVHTDMLVILNDNEMSISENVGALNNHLARLLSGSIYSTLRESGKKILSGLPPIKEFVKKTEEHVKGFVSPVGTLFEQLGFNYIGPIDGHNIHELISTLKNMQSLSGPQFLHIKTKKGKGYAPAEKDPIGFHGVPKFDHKLGELPKSSTTPTYSQIFGSWLCEIAAQDEKLIGITPAMREGSGMVEFSQQFPQQYFDVAIAEQHAVTFAAGLAIAGYKPVVAIYSTFLQRAYDQLIHDVAIQNLPVLFAIDRAGIVGADGQTHQGAFDLSFMRCIPNLVIMTPSNENECRQMLYTGYKCGKPAAVRYPRGNAIGVKLEPLAELPLGKSKLIRQGKNIAILNFGTLLSEATKVAEDLDATVVDMRFVKPLDTQRIQEIAQTHSLIVTLEENAIQGGAGSAVAETLYQQQQKVSLLQLGLPDNFIPQGTQKEMLAELKLNAEGIFEQIKQFLQKI.

Residues histidine 76 and 117–119 contribute to the thiamine diphosphate site; that span reads GHS. Aspartate 148 is a Mg(2+) binding site. Thiamine diphosphate contacts are provided by residues 149–150, asparagine 177, tyrosine 285, and glutamate 366; that span reads GA. Residue asparagine 177 participates in Mg(2+) binding.

This sequence belongs to the transketolase family. DXPS subfamily. As to quaternary structure, homodimer. Mg(2+) serves as cofactor. The cofactor is thiamine diphosphate.

It carries out the reaction D-glyceraldehyde 3-phosphate + pyruvate + H(+) = 1-deoxy-D-xylulose 5-phosphate + CO2. It functions in the pathway metabolic intermediate biosynthesis; 1-deoxy-D-xylulose 5-phosphate biosynthesis; 1-deoxy-D-xylulose 5-phosphate from D-glyceraldehyde 3-phosphate and pyruvate: step 1/1. In terms of biological role, catalyzes the acyloin condensation reaction between C atoms 2 and 3 of pyruvate and glyceraldehyde 3-phosphate to yield 1-deoxy-D-xylulose-5-phosphate (DXP). This is 1-deoxy-D-xylulose-5-phosphate synthase from Histophilus somni (strain 2336) (Haemophilus somnus).